An 880-amino-acid polypeptide reads, in one-letter code: Interference hedgehog (880 aa).

An N-terminal signal peptide occupies residues 1 to 20; sequence MPSIVSSLLLVVLLTSPLGA. Residues 21 to 703 are Extracellular-facing; the sequence is IPVLYPSPPP…SHNETFSMSP (683 aa). Ig-like C2-type domains lie at 37-142, 154-235, 251-339, and 345-432; these read PGVR…TARL, PVTS…STSS, PYLL…FIQV, and PQIV…LQVT. 4 disulfides stabilise this stretch: Cys60-Cys126, Cys172-Cys219, Cys275-Cys323, and Cys366-Cys414. 3 N-linked (GlcNAc...) asparagine glycosylation sites follow: Asn79, Asn102, and Asn208. The tract at residues 435–468 is disordered; that stretch reads PIHSESTQQSDHNHSKANRGRRPAQMIPPSAPNV. N-linked (GlcNAc...) asparagine glycans are attached at residues Asn447 and Asn467. Fibronectin type-III domains are found at residues 462–570 and 578–673; these read PPSA…LQPG and VPEM…TQRP. The heparin site is built by Arg498, Lys504, Lys506, and Arg544. The N-linked (GlcNAc...) asparagine glycan is linked to Asn560. A disordered region spans residues 665 to 699; that stretch reads LKQGRTQRPMVSTTEEATLQTGVRDTTTPSHNETF. Polar residues predominate over residues 668–699; it reads GRTQRPMVSTTEEATLQTGVRDTTTPSHNETF. N-linked (GlcNAc...) asparagine glycosylation occurs at Asn696. Residues 704–724 traverse the membrane as a helical segment; it reads IVTGTIGGGAVLILFVVTTCL. Residues 725-880 lie on the Cytoplasmic side of the membrane; it reads CMWRRRNSRA…SSGSLNSVGV (156 aa). The disordered stretch occupies residues 797–880; it reads YFQRQPTYDY…SSGSLNSVGV (84 aa). Low complexity-rich tracts occupy residues 827–839 and 864–880; these read RAGS…NNLN and SSRS…SVGV.

This sequence belongs to the immunoglobulin superfamily. IHOG family. In terms of assembly, homodimer. Heterotetramer; 2 iHog chains bind 2 hh chains when facilitated by heparin, heparin is required to promote high-affinity interactions between hh and iHog.

It is found in the membrane. Functionally, mediates response to the active Hedgehog (Hh) protein signal in embryos, functioning upstream or at the level of patched (ptc). This Drosophila ananassae (Fruit fly) protein is Interference hedgehog.